The following is a 248-amino-acid chain: UPF0524 protein C3orf70 homolog (248 aa).

Residues 169-248 (KESDTPKLGH…EVIETMETTV (80 aa)) are disordered. Over residues 200–227 (SCDEDTEEGAELSSEEDYSPESSWEPDE) the composition is skewed to acidic residues.

The protein belongs to the UPF0524 family.

Functionally, may play a role in neuronal and neurobehavioral development. This Mus musculus (Mouse) protein is UPF0524 protein C3orf70 homolog.